The following is a 356-amino-acid chain: uncharacterized protein (356 aa).

Residues 8–28 traverse the membrane as a helical segment; sequence ILGFVLFVLGAAIFLTEVMHS.

The protein to C.elegans C41C4.1 and C18B2.1.

The protein resides in the membrane. This is an uncharacterized protein from Caenorhabditis elegans.